A 233-amino-acid polypeptide reads, in one-letter code: Protein YIPF6 (233 aa).

Residues 1–84 (MAETEGFGDS…PKKSTTLLRD (84 aa)) lie on the Cytoplasmic side of the membrane. A helical membrane pass occupies residues 85 to 105 (WDLWGPLVLCVSLALMLQGGN). Residues 106–111 (ADSKDD) are Lumenal-facing. Residues 112 to 132 (GGPQFAEVFVIIWFGAVVITL) traverse the membrane as a helical segment. Topologically, residues 133-142 (NSKLLGGTIS) are cytoplasmic. A helical membrane pass occupies residues 143–163 (FFQSLCVLGYCILPLTVAMLV). Topologically, residues 164 to 180 (CRLVLLLSHTTASFIVR) are lumenal. The chain crosses the membrane as a helical span at residues 181-201 (LVVVTVMFAWSTFASTAFLAD). At 202-208 (SQPPNRR) the chain is on the cytoplasmic side. The helical transmembrane segment at 209–229 (ALAVYPIFLFYFVISWMVLTF) threads the bilayer. Over 230-233 (NTVS) the chain is Lumenal.

Belongs to the YIP1 family.

The protein resides in the golgi apparatus membrane. This Xenopus tropicalis (Western clawed frog) protein is Protein YIPF6 (yipf6).